The primary structure comprises 400 residues: Large envelope protein (400 aa).

M1 bears the N-acetylmethionine mark. G2 carries the N-myristoyl glycine; by host lipid modification. The pre-S1 stretch occupies residues 2 to 119 (GAPLSTARRG…PPLRDTHPQA (118 aa)). The segment at 2–174 (GAPLSTARRG…FSKTGDPAMN (173 aa)) is pre-S. The Virion surface; in external conformation segment spans residues 2–181 (GAPLSTARRG…AMNMENITSG (180 aa)). Residues 2–253 (GAPLSTARRG…PGYRWMCLRR (252 aa)) are Intravirion; in internal conformation-facing. P4 carries N-linked (GlcNAc...) asparagine glycosylation. Positions 70-115 (PHGGLLGWSPQAQGILTTSPPDPPPASTNRRSGRKPTPVSPPLRDT) are disordered. Residues 79-88 (PQAQGILTTS) show a composition bias toward polar residues. The tract at residues 120 to 174 (MQWNSTQFHQALLDPRVRGLYFPAGGSSSETQNPAPTIASLTSSIFSKTGDPAMN) is pre-S2. Residues 182–202 (LLRPLLVLQAVCFLLTKILTI) form a helical membrane-spanning segment. Over 203 to 253 (PQSLDSWWTSLNFLGVPPGCPGQNSQSPISNHLPTSCPPTCPGYRWMCLRR) the chain is Intravirion; in external conformation. A helical transmembrane segment spans residues 254–274 (FIIFLFILLLCLIFLLVLLDY). The Virion surface segment spans residues 275-348 (QGMLPVCPLL…WASARFSWLS (74 aa)). N320 carries an N-linked (GlcNAc...) asparagine; by host glycan. Residues 349 to 369 (LLVQFVQWCVGLSPTVWLLVI) form a helical membrane-spanning segment. Topologically, residues 370–375 (WMIWYW) are intravirion. A helical transmembrane segment spans residues 376–398 (GPNLCSILSPFIPLLPIFCYLWA). The Virion surface portion of the chain corresponds to 399-400 (SI).

The protein belongs to the orthohepadnavirus major surface antigen family. As to quaternary structure, in its internal form (Li-HBsAg), interacts with the capsid protein and with the isoform S. Interacts with host chaperone CANX. In terms of assembly, associates with host chaperone CANX through its pre-S2 N glycan; this association may be essential for isoform M proper secretion. Interacts with isoform L. Interacts with the antigens of satellite virus HDV (HDVAgs); this interaction is required for encapsidation of HDV genomic RNA. Post-translationally, isoform M is N-terminally acetylated by host at a ratio of 90%, and N-glycosylated by host at the pre-S2 region. Myristoylated.

It localises to the virion membrane. The large envelope protein exists in two topological conformations, one which is termed 'external' or Le-HBsAg and the other 'internal' or Li-HBsAg. In its external conformation the protein attaches the virus to cell receptors and thereby initiating infection. This interaction determines the species specificity and liver tropism. This attachment induces virion internalization predominantly through caveolin-mediated endocytosis. The large envelope protein also assures fusion between virion membrane and endosomal membrane. In its internal conformation the protein plays a role in virion morphogenesis and mediates the contact with the nucleocapsid like a matrix protein. Functionally, the middle envelope protein plays an important role in the budding of the virion. It is involved in the induction of budding in a nucleocapsid independent way. In this process the majority of envelope proteins bud to form subviral lipoprotein particles of 22 nm of diameter that do not contain a nucleocapsid. The sequence is that of Large envelope protein from Hepatitis B virus genotype H (isolate United States/LAS2523/2002) (HBV-H).